A 273-amino-acid chain; its full sequence is Peptidyl-prolyl cis-trans isomerase E (273 aa).

The region spanning 1–48 (MPMDYQTEKHRGFAFVEFEEVEDAMSAIDNMNESEIFGRTIRVNVARP) is the RRM domain. The disordered stretch occupies residues 77 to 103 (RKLDEPDIVNPSDTSENVEDLSDEEMR). The region spanning 115–271 (FFDIRIGNGD…EPVIISRCGE (157 aa)) is the PPIase cyclophilin-type domain.

Belongs to the cyclophilin-type PPIase family. PPIase E subfamily.

The protein localises to the cytoplasm. The catalysed reaction is [protein]-peptidylproline (omega=180) = [protein]-peptidylproline (omega=0). Binds cyclosporin A (CsA). CsA mediates some of its effects via an inhibitory action on PPIase. Functionally, PPIases accelerate the folding of proteins. It catalyzes the cis-trans isomerization of proline imidic peptide bonds in oligopeptides. The sequence is that of Peptidyl-prolyl cis-trans isomerase E from Schistosoma mansoni (Blood fluke).